We begin with the raw amino-acid sequence, 298 residues long: Probable D,D-dipeptide transport system permease protein DdpC (298 aa).

The Cytoplasmic segment spans residues 1-33; the sequence is MMLSEETSAVRPQKQTRFNGAKLVWMLKGSPLT. A helical membrane pass occupies residues 34–54; it reads VTSAVIIVLMLLMMIFSPWLA. The Periplasmic portion of the chain corresponds to 55–96; that stretch reads THDPNAIDLTARLLPPSAAHWFGTDEVGRDLFSRVLVGSQQS. The chain crosses the membrane as a helical span at residues 97–117; that stretch reads ILAGLVVVAIAGMIGSLLGCL. Residues 97–282 form the ABC transmembrane type-1 domain; sequence ILAGLVVVAI…LTAVGFNLFG (186 aa). The Cytoplasmic segment spans residues 118 to 124; it reads SGVLGGR. The next 2 helical transmembrane spans lie at 125-145 and 146-166; these read ADAI…LVLT and MALA…IAIV. Topologically, residues 167–217 are cytoplasmic; it reads RIPFYVRLARGQALVVRQYTYVQAAKTFGASRWHLINWHILRNSLPPLIVQ. The chain crosses the membrane as a helical span at residues 218-238; that stretch reads ASLDIGSAILMAATLGFIGLG. The Periplasmic segment spans residues 239–260; it reads AQQPSAEWGAMVANGRNYVLDQ. Residues 261–281 form a helical membrane-spanning segment; that stretch reads WWYCAFPGAAILLTAVGFNLF. The Cytoplasmic segment spans residues 282–298; sequence GDGIRDLLDPKAGGKQS.

This sequence belongs to the binding-protein-dependent transport system permease family. OppBC subfamily. In terms of assembly, the complex is composed of two ATP-binding proteins (DdpD and DdpF), two transmembrane proteins (DdpB and DdpC) and a solute-binding protein (DdpA).

It is found in the cell inner membrane. Part of the ABC transporter complex DdpABCDF, which is probably involved in D,D-dipeptide transport. Probably responsible for the translocation of the substrate across the membrane. In Escherichia coli (strain K12), this protein is Probable D,D-dipeptide transport system permease protein DdpC (ddpC).